Reading from the N-terminus, the 271-residue chain is 5-deoxy-glucuronate isomerase (271 aa).

It belongs to the isomerase IolB family.

The enzyme catalyses 5-deoxy-D-glucuronate = 5-dehydro-2-deoxy-D-gluconate. It participates in polyol metabolism; myo-inositol degradation into acetyl-CoA; acetyl-CoA from myo-inositol: step 4/7. Involved in the isomerization of 5-deoxy-glucuronate (5DG) to 5-dehydro-2-deoxy-D-gluconate (DKG or 2-deoxy-5-keto-D-gluconate). This chain is 5-deoxy-glucuronate isomerase, found in Lacticaseibacillus casei (Lactobacillus casei).